Consider the following 338-residue polypeptide: tRNA N6-adenosine threonylcarbamoyltransferase (338 aa).

Fe cation-binding residues include H111 and H115. Substrate contacts are provided by residues 134-138, D167, G180, and N275; that span reads LLSGG. D304 serves as a coordination point for Fe cation.

Belongs to the KAE1 / TsaD family. Fe(2+) is required as a cofactor.

The protein resides in the cytoplasm. It carries out the reaction L-threonylcarbamoyladenylate + adenosine(37) in tRNA = N(6)-L-threonylcarbamoyladenosine(37) in tRNA + AMP + H(+). Its function is as follows. Required for the formation of a threonylcarbamoyl group on adenosine at position 37 (t(6)A37) in tRNAs that read codons beginning with adenine. Is involved in the transfer of the threonylcarbamoyl moiety of threonylcarbamoyl-AMP (TC-AMP) to the N6 group of A37, together with TsaE and TsaB. TsaD likely plays a direct catalytic role in this reaction. This is tRNA N6-adenosine threonylcarbamoyltransferase from Leptospira interrogans serogroup Icterohaemorrhagiae serovar copenhageni (strain Fiocruz L1-130).